Reading from the N-terminus, the 222-residue chain is MKNNSQLLMPREKMLKFGISALTDVELLALFLRTGTRGKDVLTLAKEMLENFGSLYGLLTSEYEQFSGVHGIGVAKFAQLKGIAELARRYYNVRMREESPLLSPEMTREFLQSQLTGEEREIFMVIFLDSQHRVITHSRLFSGTLNHVEVHPREIIREAIKINASALILAHNHPSGCAEPSKADKLITERIIKSCQFMDLRVLDHIVIGRGENVSFAERGWI.

Positions 100 to 222 constitute an MPN domain; the sequence is PLLSPEMTRE…NVSFAERGWI (123 aa). Zn(2+) contacts are provided by His-171, His-173, and Asp-184. A JAMM motif motif is present at residues 171–184; sequence HNHPSGCAEPSKAD.

It belongs to the UPF0758 family. YicR subfamily.

The protein is UPF0758 protein YicR of Shigella boydii serotype 18 (strain CDC 3083-94 / BS512).